The chain runs to 414 residues: Zinc metalloproteinase-disintegrin-like batroxstatin-3 (414 aa).

N7 and N70 each carry an N-linked (GlcNAc...) asparagine glycan. The region spanning 10 to 204 is the Peptidase M12B domain; it reads KYIKLVIVAD…HTPQCILNEP (195 aa). Disulfide bonds link C121–C199, C161–C183, and C163–C168. H146 lines the Zn(2+) pocket. The active site involves E147. 2 residues coordinate Zn(2+): H150 and H156. One can recognise a Disintegrin domain in the interval 212–298; the sequence is PEVCGNYLLE…HCPTDRFHRN (87 aa). 5 residues coordinate Ca(2+): V214, N217, E221, E224, and D227. 14 disulfides stabilise this stretch: C215–C244, C226–C239, C228–C234, C238–C261, C252–C258, C257–C283, C270–C290, C277–C309, C302–C314, C321–C371, C336–C381, C349–C359, C366–C403, and C397–C408. Positions 276–278 match the D/ECD-tripeptide motif; sequence ECD. Residues D278, E281, D293, and R294 each contribute to the Ca(2+) site.

The protein belongs to the venom metalloproteinase (M12B) family. P-III subfamily. P-IIIa sub-subfamily. In terms of assembly, monomer. It depends on Zn(2+) as a cofactor. Expressed by the venom gland.

It localises to the secreted. In terms of biological role, snake venom zinc metalloprotease that induces apoptosis in vascular endothelial cells (VEC), without degrading the extracellular matrix (it cannot cleave collagen) or inhibiting adhesion of VEC. Has also fibrinogenolytic and hemorrhagic activities. This chain is Zinc metalloproteinase-disintegrin-like batroxstatin-3, found in Bothrops atrox (Barba amarilla).